The primary structure comprises 208 residues: Uracil phosphoribosyltransferase (208 aa).

Residues arginine 78, arginine 103, and 130-138 each bind 5-phospho-alpha-D-ribose 1-diphosphate; that span reads DPMLATGGS. Uracil-binding positions include isoleucine 193 and 198-200; that span reads GDA. Aspartate 199 provides a ligand contact to 5-phospho-alpha-D-ribose 1-diphosphate.

It belongs to the UPRTase family. It depends on Mg(2+) as a cofactor.

It carries out the reaction UMP + diphosphate = 5-phospho-alpha-D-ribose 1-diphosphate + uracil. The protein operates within pyrimidine metabolism; UMP biosynthesis via salvage pathway; UMP from uracil: step 1/1. With respect to regulation, allosterically activated by GTP. Its function is as follows. Catalyzes the conversion of uracil and 5-phospho-alpha-D-ribose 1-diphosphate (PRPP) to UMP and diphosphate. The chain is Uracil phosphoribosyltransferase from Haemophilus influenzae (strain 86-028NP).